Here is a 128-residue protein sequence, read N- to C-terminus: Gas vesicle protein O (128 aa).

Positions 1–49 (MANTPEDTQNTQNDSQNDSQNDSQKDTSARATSARAHQQPQEQPPSPMR) are disordered. Over residues 7–22 (DTQNTQNDSQNDSQND) the composition is skewed to low complexity. The span at 29-41 (ARATSARAHQQPQ) shows a compositional bias: polar residues.

The protein belongs to the gas vesicle GvpO family.

Its subcellular location is the gas vesicle. Functionally, a minor component of the gas vesicle. May play a role in transcription and/or RNA stability and in GV assembly. Gas vesicles are hollow, gas filled proteinaceous nanostructures found in some microorganisms. It is not clear what function gas vesicles perform in soil bacteria. The polypeptide is Gas vesicle protein O (Streptomyces sp. (strain CB03234)).